The chain runs to 229 residues: ATP-dependent dethiobiotin synthetase BioD (229 aa).

15-20 (EIGKTL) is a binding site for ATP. T19 is a Mg(2+) binding site. The active site involves K40. Residues D57, 118–121 (EGVG), and 207–209 (PRL) contribute to the ATP site. Mg(2+) contacts are provided by D57 and E118.

It belongs to the dethiobiotin synthetase family. In terms of assembly, homodimer. Requires Mg(2+) as cofactor.

It is found in the cytoplasm. It carries out the reaction (7R,8S)-7,8-diammoniononanoate + CO2 + ATP = (4R,5S)-dethiobiotin + ADP + phosphate + 3 H(+). It functions in the pathway cofactor biosynthesis; biotin biosynthesis; biotin from 7,8-diaminononanoate: step 1/2. Catalyzes a mechanistically unusual reaction, the ATP-dependent insertion of CO2 between the N7 and N8 nitrogen atoms of 7,8-diaminopelargonic acid (DAPA, also called 7,8-diammoniononanoate) to form a ureido ring. The sequence is that of ATP-dependent dethiobiotin synthetase BioD from Ralstonia nicotianae (strain ATCC BAA-1114 / GMI1000) (Ralstonia solanacearum).